The following is a 518-amino-acid chain: Probable bifunctional methylthioribulose-1-phosphate dehydratase/enolase-phosphatase E1 (518 aa).

The interval 1–247 (MAAAPPAVAV…AIKLHQIGLD (247 aa)) is methylthioribulose-1-phosphate dehydratase. Position 119 (Cys119) interacts with substrate. Positions 137 and 139 each coordinate Zn(2+). Glu162 acts as the Proton donor/acceptor; for methylthioribulose-1-phosphate dehydratase activity in catalysis. His212 is a Zn(2+) binding site. The tract at residues 279–518 (IVLDIEGTTT…FKTITSFAEI (240 aa)) is enolase-phosphatase E1. Positions 282 and 284 each coordinate Mg(2+). Substrate is bound by residues 417 to 418 (SS) and Lys451. Residue Asp477 participates in Mg(2+) binding.

This sequence in the N-terminal section; belongs to the aldolase class II family. MtnB subfamily. It in the C-terminal section; belongs to the HAD-like hydrolase superfamily. MasA/MtnC family. It depends on Zn(2+) as a cofactor. Mg(2+) serves as cofactor.

The catalysed reaction is 5-(methylsulfanyl)-D-ribulose 1-phosphate = 5-methylsulfanyl-2,3-dioxopentyl phosphate + H2O. It catalyses the reaction 5-methylsulfanyl-2,3-dioxopentyl phosphate + H2O = 1,2-dihydroxy-5-(methylsulfanyl)pent-1-en-3-one + phosphate. The protein operates within amino-acid biosynthesis; L-methionine biosynthesis via salvage pathway; L-methionine from S-methyl-5-thio-alpha-D-ribose 1-phosphate: step 2/6. It functions in the pathway amino-acid biosynthesis; L-methionine biosynthesis via salvage pathway; L-methionine from S-methyl-5-thio-alpha-D-ribose 1-phosphate: step 3/6. Its pathway is amino-acid biosynthesis; L-methionine biosynthesis via salvage pathway; L-methionine from S-methyl-5-thio-alpha-D-ribose 1-phosphate: step 4/6. This Populus trichocarpa (Western balsam poplar) protein is Probable bifunctional methylthioribulose-1-phosphate dehydratase/enolase-phosphatase E1.